The following is a 218-amino-acid chain: Probable 3-keto-L-gulonate-6-phosphate decarboxylase (218 aa).

Residue D11 coordinates substrate. 2 residues coordinate Mg(2+): E33 and D62. Substrate is bound at residue R194.

This sequence belongs to the HPS/KGPDC family. KGPDC subfamily. The cofactor is Mg(2+).

The catalysed reaction is 3-dehydro-L-gulonate 6-phosphate + H(+) = L-xylulose 5-phosphate + CO2. The protein operates within cofactor degradation; L-ascorbate degradation; D-xylulose 5-phosphate from L-ascorbate: step 2/4. Catalyzes the decarboxylation of 3-keto-L-gulonate-6-P into L-xylulose-5-P. Is involved in the anaerobic L-ascorbate utilization. The sequence is that of Probable 3-keto-L-gulonate-6-phosphate decarboxylase (ulaD) from Mycoplasma pneumoniae (strain ATCC 29342 / M129 / Subtype 1) (Mycoplasmoides pneumoniae).